We begin with the raw amino-acid sequence, 878 residues long: Serine/threonine-protein kinase D2 (878 aa).

The span at 1–12 (MATAPSYPAGLP) shows a compositional bias: low complexity. The segment at 1–35 (MATAPSYPAGLPGSPGPGSPPPPGGLELQSPPPLL) is disordered. Pro residues predominate over residues 14–35 (SPGPGSPPPPGGLELQSPPPLL). Position 30 is a phosphoserine (serine 30). At tyrosine 87 the chain carries Phosphotyrosine. Residues 138–188 (PHALTVHSYRAPAFCDHCGEMLFGLVRQGLKCDGCGLNYHKRCAFSIPNNC) form a Phorbol-ester/DAG-type 1 zinc finger. Phosphoserine is present on residues serine 197, serine 198, serine 200, serine 203, serine 206, serine 212, and serine 214. The tract at residues 224–247 (RSTTELLPRRPPSSSSSSSASSYT) is disordered. Low complexity predominate over residues 236-245 (SSSSSSSASS). A Phosphoserine; by CSNK1D and CSNK1E modification is found at serine 244. The segment at 264–314 (PHTFLIHSYTRPTVCQACKKLLKGLFRQGLQCKDCKFNCHKRCATRVPNDC) adopts a Phorbol-ester/DAG-type 2 zinc-finger fold. The segment at 343 to 373 (ESEDSGVIPGSHSENALHASEEEEGEGGKAQ) is disordered. One can recognise a PH domain in the interval 397–509 (TTLREGWVVH…WETAIRQALM (113 aa)). Tyrosine 407 carries the post-translational modification Phosphotyrosine. The residue at position 438 (tyrosine 438) is a Phosphotyrosine; by ABL1. Serine 518 bears the Phosphoserine mark. The Protein kinase domain maps to 551-807 (IFPDEVLGSG…VDKSLSHPWL (257 aa)). ATP-binding positions include 557 to 565 (LGSGQFGVV) and lysine 580. Catalysis depends on aspartate 674, which acts as the Proton acceptor. Residue serine 706 is modified to Phosphoserine; by PKC. A Phosphoserine modification is found at serine 710. Tyrosine 717 carries the post-translational modification Phosphotyrosine; by ABL1. Positions 724 to 726 (LNQ) match the Important for ABL1-mediated Tyr-717 phosphorylation motif. The disordered stretch occupies residues 844-869 (HPLPGSGLPTDRDLGGACPPQDHDMQ). Position 876 is a phosphoserine; by autocatalysis (serine 876).

It belongs to the protein kinase superfamily. CAMK Ser/Thr protein kinase family. PKD subfamily. Interacts (via C-terminus) with LCK. Interacts (via N-terminal AP-rich region) with CIB1 isoform 2. Interacts (via N-terminus and zing-finger domain 1 and 2) with PRKCD in response to oxidative stress; the interaction is independent of PRKD2 tyrosine phosphorylation. The cofactor is Mg(2+). Post-translationally, phosphorylation of Ser-876 correlates with the activation status of the kinase. Ser-706 or/and Ser-710 are probably phosphorylated by PKC. Phosphorylation at Ser-244 by CSNK1D and CSNK1E promotes nuclear localization and substrate targeting. Phosphorylation at Ser-244, Ser-706 and Ser-710 is required for nuclear localization. Phosphorylated at Tyr-438 by ABL1 in response to oxidative stress. Phosphorylated at Tyr-717 by ABL1 specifically in response to oxidative stress; requires prior phosphorylation at Ser-706 or/and Ser-710. Widely expressed.

The protein localises to the cytoplasm. It localises to the cell membrane. It is found in the nucleus. Its subcellular location is the golgi apparatus. The protein resides in the trans-Golgi network. The catalysed reaction is L-seryl-[protein] + ATP = O-phospho-L-seryl-[protein] + ADP + H(+). It catalyses the reaction L-threonyl-[protein] + ATP = O-phospho-L-threonyl-[protein] + ADP + H(+). With respect to regulation, activated by DAG and phorbol esters. Phorbol-ester/DAG-type domains bind DAG, mediating translocation to membranes. Autophosphorylation of Ser-710 and phosphorylation of Ser-706 by PKC relieves auto-inhibition by the PH domain. Catalytic activity is further increased by phosphorylation at Tyr-717 in response to oxidative stress. In terms of biological role, serine/threonine-protein kinase that converts transient diacylglycerol (DAG) signals into prolonged physiological effects downstream of PKC, and is involved in the regulation of cell proliferation via MAPK1/3 (ERK1/2) signaling, oxidative stress-induced NF-kappa-B activation, inhibition of HDAC7 transcriptional repression, signaling downstream of T-cell antigen receptor (TCR) and cytokine production, and plays a role in Golgi membrane trafficking, angiogenesis, secretory granule release and cell adhesion. May potentiate mitogenesis induced by the neuropeptide bombesin by mediating an increase in the duration of MAPK1/3 (ERK1/2) signaling, which leads to accumulation of immediate-early gene products including FOS that stimulate cell cycle progression. In response to oxidative stress, is phosphorylated at Tyr-438 and Tyr-717 by ABL1, which leads to the activation of PRKD2 without increasing its catalytic activity, and mediates activation of NF-kappa-B. In response to the activation of the gastrin receptor CCKBR, is phosphorylated at Ser-244 by CSNK1D and CSNK1E, translocates to the nucleus, phosphorylates HDAC7, leading to nuclear export of HDAC7 and inhibition of HDAC7 transcriptional repression of NR4A1/NUR77. Upon TCR stimulation, is activated independently of ZAP70, translocates from the cytoplasm to the nucleus and is required for interleukin-2 (IL2) promoter up-regulation. During adaptive immune responses, is required in peripheral T-lymphocytes for the production of the effector cytokines IL2 and IFNG after TCR engagement and for optimal induction of antibody responses to antigens. In epithelial cells stimulated with lysophosphatidic acid (LPA), is activated through a PKC-dependent pathway and mediates LPA-stimulated interleukin-8 (IL8) secretion via a NF-kappa-B-dependent pathway. During TCR-induced T-cell activation, interacts with and is activated by the tyrosine kinase LCK, which results in the activation of the NFAT transcription factors. In the trans-Golgi network (TGN), regulates the fission of transport vesicles that are on their way to the plasma membrane and in polarized cells is involved in the transport of proteins from the TGN to the basolateral membrane. Plays an important role in endothelial cell proliferation and migration prior to angiogenesis, partly through modulation of the expression of KDR/VEGFR2 and FGFR1, two key growth factor receptors involved in angiogenesis. In secretory pathway, is required for the release of chromogranin-A (CHGA)-containing secretory granules from the TGN. Downstream of PRKCA, plays important roles in angiotensin-2-induced monocyte adhesion to endothelial cells. Plays a regulatory role in angiogenesis and tumor growth by phosphorylating a downstream mediator CIB1 isoform 2, resulting in vascular endothelial growth factor A (VEGFA) secretion. The sequence is that of Serine/threonine-protein kinase D2 (PRKD2) from Homo sapiens (Human).